We begin with the raw amino-acid sequence, 283 residues long: MSKFLSQAAINTLRNTRLGSRQLVRSFAGISNTRNHRGAGHQEWGCGQSAERGLLELRMPVACRRSMFIQTQDTPNPESLKFLPGVDVLGKGNTYDFPHGTTAHSSPLAKLLFRVEGVKGVFFGADFITISKQEGAEWSLIKPEVFAVIMDFFASGLPVLNDAQPNADTEILEDDDETVMMIKELLDTRIRPTVQEDGGDIVFMGYEAGVVKLKMQGSCSSCPSSIVTLKNGVQNMLQFYIPEVESVEQVFDEADRMIDSEFERFEKNLKTLKQQGPSGGGPH.

The transit peptide at 1–65 (MSKFLSQAAI…ELRMPVACRR (65 aa)) directs the protein to the mitochondrion. The interval 182-250 (IKELLDTRIR…IPEVESVEQV (69 aa)) is nifU. 2 residues coordinate [4Fe-4S] cluster: C219 and C222.

It belongs to the NifU family.

It is found in the mitochondrion. Its function is as follows. Molecular scaffold for [Fe-S] cluster assembly of mitochondrial iron-sulfur proteins. In Drosophila simulans (Fruit fly), this protein is NFU1 iron-sulfur cluster scaffold homolog, mitochondrial.